Here is a 327-residue protein sequence, read N- to C-terminus: G protein pathway suppressor 2 (327 aa).

Residues 14–109 adopt a coiled-coil conformation; that stretch reads MARALHRHIM…RRRKEQSDLT (96 aa). Residues 26-65 form a disordered region; that stretch reads RERKRQEEEEVDKMMEQKMKEEQERRKKKEMEERMSLEET. Residues Lys-45 and Lys-71 each participate in a glycyl lysine isopeptide (Lys-Gly) (interchain with G-Cter in SUMO1) cross-link. The interval 61-94 is interaction with SUMO; the sequence is SLEETKEQILKLEEKLLALQEEKHQLFLQLKKVL. Disordered regions lie at residues 177–208 and 253–327; these read HGQF…SPSQ and QKQM…FYHK. Polar residues predominate over residues 253–271; it reads QKQMEHANQQTGFSDSSSL. Arg-312 carries the asymmetric dimethylarginine modification. Residues 317–327 show a composition bias toward polar residues; it reads QHSQNPRFYHK. The residue at position 323 (Arg-323) is an Asymmetric dimethylarginine; alternate. Arg-323 is subject to Omega-N-methylarginine; alternate.

In terms of assembly, component of the N-Cor repressor complex, at least composed of NCOR1, NCOR2, HDAC3, TBL1X, TBL1R, CORO2A and GPS2. Interacts (when sumoylated at Lys-71) with TBL1X; leading to protect GPS2 from degradation by the proteasome. Interacts with UBE2N; leading to inhibit UBE2N/Ubc13 activity. Interacts with TRAF1. Interacts with TRAF2. Interacts with TRAF6. Interacts with PPARG (when in the liganded conformation). Interacts with (sumoylated) NR1H2; interaction with sumoylated NR1H2 and NR5A2 onto hepatic acute phase protein promoters prevents N-Cor corepressor complex dissociation. Interacts with (sumoylated) NR5A2; interaction with sumoylated NR1H2 and NR5A2 onto hepatic acute phase protein promoters prevents N-Cor corepressor complex dissociation. Interacts with NR1H3. Interacts with RFX4. Interacts with ANKRD26. As to quaternary structure, (Microbial infection) Interacts (via coiled coil domain) with hepatitis C virus (HCV) NS5A. In terms of processing, sumoylation regulates its subcellular location. Sumoylation at Lys-45 and Lys-71 regulates the shuttling between the cytoplasm and the nucleus. Sumoylation at Lys-71 is required for interaction with TBL1X. Sumoylated at Lys-45 and Lys-71 in mitochondrion. Desumoylation by SENP1 leads to relocation from the mitochondria to the nucleus. Ubiquitinated at the C-terminus by SIAH2; leading to its degradation by the proteasome. Interaction with TBL1X and methylation at Arg-323 protect GPS2 against ubiquitination and degradation. Post-translationally, methylated at Arg-312 and Arg-323 by PRMT6. Methylation at Arg-323 protects from degradation by the proteasome. Widely expressed.

It is found in the nucleus. It localises to the mitochondrion. Its subcellular location is the cytoplasm. The protein localises to the cytosol. In terms of biological role, key regulator of inflammation, lipid metabolism and mitochondrion homeostasis that acts by inhibiting the activity of the ubiquitin-conjugating enzyme UBE2N/Ubc13, thereby inhibiting 'Lys-63'-linked ubiquitination. In the nucleus, can both acts as a corepressor and coactivator of transcription, depending on the context. Acts as a transcription coactivator in adipocytes by promoting the recruitment of PPARG to promoters: acts by inhibiting the activity of the ubiquitin-conjugating enzyme UBE2N/Ubc13, leading to stabilization of KDM4A and subsequent histone H3 'Lys-9' (H3K9) demethylation. Promotes cholesterol efflux by acting as a transcription coactivator. Acts as a regulator of B-cell development by inhibiting UBE2N/Ubc13, thereby restricting the activation of Toll-like receptors (TLRs) and B-cell antigen receptors (BCRs) signaling pathways. Acts as a key mediator of mitochondrial stress response: in response to mitochondrial depolarization, relocates from the mitochondria to the nucleus following desumoylation and specifically promotes expression of nuclear-encoded mitochondrial genes. Promotes transcription of nuclear-encoded mitochondrial genes by inhibiting UBE2N/Ubc13. Can also act as a corepressor as part of the N-Cor repressor complex by repressing active PPARG. Plays an anti-inflammatory role in macrophages and is required for insulin sensitivity by acting as a corepressor. Plays an anti-inflammatory role during the hepatic acute phase response by interacting with sumoylated NR1H2 and NR5A2 proteins, thereby preventing N-Cor corepressor complex dissociation. In the cytosol, also plays a non-transcriptional role by regulating insulin signaling and pro-inflammatory pathways. In the cytoplasm, acts as a negative regulator of inflammation by inhibiting the pro-inflammatory TNF-alpha pathway; acts by repressing UBE2N/Ubc13 activity. In the cytoplasm of adipocytes, restricts the activation of insulin signaling via inhibition of UBE2N/Ubc13-mediated ubiquitination of AKT. Able to suppress G-protein- and mitogen-activated protein kinase-mediated signal transduction. Acts as a tumor-suppressor in liposarcoma. (Microbial infection) Required for efficient replication of hepatitis C virus (HCV) by promoting the interaction between VAPA and HCV virus protein NS5A. In Homo sapiens (Human), this protein is G protein pathway suppressor 2.